Consider the following 477-residue polypeptide: Argininosuccinate lyase (477 aa).

It belongs to the lyase 1 family. Argininosuccinate lyase subfamily.

The protein localises to the cytoplasm. The enzyme catalyses 2-(N(omega)-L-arginino)succinate = fumarate + L-arginine. The protein operates within amino-acid biosynthesis; L-arginine biosynthesis; L-arginine from L-ornithine and carbamoyl phosphate: step 3/3. This is Argininosuccinate lyase from Corynebacterium diphtheriae (strain ATCC 700971 / NCTC 13129 / Biotype gravis).